Here is a 947-residue protein sequence, read N- to C-terminus: Bifunctional glutamine synthetase adenylyltransferase/adenylyl-removing enzyme (947 aa).

An adenylyl removase region spans residues 1 to 440 (MTPLSSPLSQ…VFNELIGDDE (440 aa)). The adenylyl transferase stretch occupies residues 450-947 (SEPWREVWQD…ASWRKWLVAV (498 aa)).

This sequence belongs to the GlnE family. Requires Mg(2+) as cofactor.

The catalysed reaction is [glutamine synthetase]-O(4)-(5'-adenylyl)-L-tyrosine + phosphate = [glutamine synthetase]-L-tyrosine + ADP. The enzyme catalyses [glutamine synthetase]-L-tyrosine + ATP = [glutamine synthetase]-O(4)-(5'-adenylyl)-L-tyrosine + diphosphate. Involved in the regulation of glutamine synthetase GlnA, a key enzyme in the process to assimilate ammonia. When cellular nitrogen levels are high, the C-terminal adenylyl transferase (AT) inactivates GlnA by covalent transfer of an adenylyl group from ATP to specific tyrosine residue of GlnA, thus reducing its activity. Conversely, when nitrogen levels are low, the N-terminal adenylyl removase (AR) activates GlnA by removing the adenylyl group by phosphorolysis, increasing its activity. The regulatory region of GlnE binds the signal transduction protein PII (GlnB) which indicates the nitrogen status of the cell. This Salmonella heidelberg (strain SL476) protein is Bifunctional glutamine synthetase adenylyltransferase/adenylyl-removing enzyme.